We begin with the raw amino-acid sequence, 473 residues long: Serine/threonine-protein phosphatase T (473 aa).

TPR repeat units follow at residues Ala-5–Asn-38, Ile-40–Tyr-72, and Ala-73–Asp-106. A catalytic region spans residues Lys-159 to Gly-472. Mn(2+) contacts are provided by Asp-217, His-219, Asp-246, and Asn-278. The active-site Proton donor/acceptor is His-279. The Mn(2+) site is built by His-327 and His-404.

It belongs to the PPP phosphatase family. PP-5 (PP-T) subfamily. Mg(2+) is required as a cofactor. Mn(2+) serves as cofactor.

It localises to the nucleus. It catalyses the reaction O-phospho-L-seryl-[protein] + H2O = L-seryl-[protein] + phosphate. It carries out the reaction O-phospho-L-threonyl-[protein] + H2O = L-threonyl-[protein] + phosphate. Functionally, protein phosphatase that specifically binds to and dephosphorylates the molecular chaperone Hsp90. Dephosphorylation positively regulates the Hsp90 chaperone machinery. The polypeptide is Serine/threonine-protein phosphatase T (ppt1) (Schizosaccharomyces pombe (strain 972 / ATCC 24843) (Fission yeast)).